Here is a 557-residue protein sequence, read N- to C-terminus: Arginine--tRNA ligase (557 aa).

Positions 132–142 (ANPTGDLHLGH) match the 'HIGH' region motif.

This sequence belongs to the class-I aminoacyl-tRNA synthetase family. In terms of assembly, monomer.

The protein localises to the cytoplasm. The catalysed reaction is tRNA(Arg) + L-arginine + ATP = L-arginyl-tRNA(Arg) + AMP + diphosphate. The chain is Arginine--tRNA ligase from Geobacillus kaustophilus (strain HTA426).